Consider the following 98-residue polypeptide: NADH-ubiquinone oxidoreductase chain 4L (98 aa).

Transmembrane regions (helical) follow at residues 1 to 21, 29 to 49, and 59 to 79; these read MTLI…GFLM, ALLC…LTVL, and MPII…ALLV.

This sequence belongs to the complex I subunit 4L family. As to quaternary structure, core subunit of respiratory chain NADH dehydrogenase (Complex I) which is composed of 45 different subunits.

The protein resides in the mitochondrion inner membrane. The catalysed reaction is a ubiquinone + NADH + 5 H(+)(in) = a ubiquinol + NAD(+) + 4 H(+)(out). Its function is as follows. Core subunit of the mitochondrial membrane respiratory chain NADH dehydrogenase (Complex I) which catalyzes electron transfer from NADH through the respiratory chain, using ubiquinone as an electron acceptor. Part of the enzyme membrane arm which is embedded in the lipid bilayer and involved in proton translocation. The protein is NADH-ubiquinone oxidoreductase chain 4L (MT-ND4L) of Inia geoffrensis (Amazon river dolphin).